The sequence spans 258 residues: Regulatory protein RecX (258 aa).

The protein belongs to the RecX family.

It is found in the cytoplasm. Modulates RecA activity. In Streptococcus equi subsp. equi (strain 4047), this protein is Regulatory protein RecX.